The following is a 426-amino-acid chain: Hemojuvelin (426 aa).

Positions 1–35 (MGEPGQSPSPRSSHGSPPTLSTLTLLLLLCGHAHS) are cleaved as a signal peptide. At Tyr-46 the chain carries Phosphotyrosine. N-linked (GlcNAc...) asparagine glycosylation is present at Asn-118. Residues 119–142 (CSRQGPTAPPPPRGPALPGAGSGL) form a disordered region. 2 disulfides stabilise this stretch: Cys-148–Cys-230 and Cys-167–Cys-317. Residues Asn-213 and Asn-372 are each glycosylated (N-linked (GlcNAc...) asparagine). Asp-400 carries GPI-anchor amidated aspartate lipidation. Positions 401–426 (AGVPLSSATLLAPLLSGLFVLWLCIQ) are cleaved as a propeptide — removed in mature form.

Belongs to the repulsive guidance molecule (RGM) family. In terms of assembly, interacts with BMP2 and BMP4. Interacts with BMP6. Interacts with BMPR1B. Interacts with TMPRSS6. In terms of processing, autocatalytically cleaved at low pH; the two chains remain linked via two disulfide bonds. Also proteolytically processed by TMPRSS6, several fragments being released in the extracellular space; regulates HJV activity in BMP signaling and thefore iron homeostasis. In terms of tissue distribution, adult and fetal liver, heart, and skeletal muscle.

Its subcellular location is the cell membrane. Acts as a bone morphogenetic protein (BMP) coreceptor. Through enhancement of BMP signaling regulates hepcidin (HAMP) expression and regulates iron homeostasis. The sequence is that of Hemojuvelin from Homo sapiens (Human).